The primary structure comprises 498 residues: ATP synthase subunit beta, chloroplastic (498 aa).

172–179 serves as a coordination point for ATP; the sequence is GGAGVGKT.

It belongs to the ATPase alpha/beta chains family. In terms of assembly, F-type ATPases have 2 components, CF(1) - the catalytic core - and CF(0) - the membrane proton channel. CF(1) has five subunits: alpha(3), beta(3), gamma(1), delta(1), epsilon(1). CF(0) has four main subunits: a(1), b(1), b'(1) and c(9-12).

It localises to the plastid. Its subcellular location is the chloroplast thylakoid membrane. The enzyme catalyses ATP + H2O + 4 H(+)(in) = ADP + phosphate + 5 H(+)(out). Produces ATP from ADP in the presence of a proton gradient across the membrane. The catalytic sites are hosted primarily by the beta subunits. This chain is ATP synthase subunit beta, chloroplastic, found in Panax ginseng (Korean ginseng).